A 385-amino-acid polypeptide reads, in one-letter code: Probable caffeine synthase MTL2 (385 aa).

Positions 18, 62, 67, 101, 102, 140, 141, and 157 each coordinate S-adenosyl-L-homocysteine. Residues tyrosine 158, histidine 161, and tryptophan 162 each coordinate caffeine. Asparagine 179 is a Mg(2+) binding site. Position 238 (threonine 238) interacts with caffeine. Mg(2+) is bound by residues aspartate 261, phenylalanine 263, and asparagine 264. Tyrosine 369 serves as a coordination point for caffeine.

This sequence belongs to the methyltransferase superfamily. Type-7 methyltransferase family. The cofactor is Mg(2+).

Its pathway is alkaloid biosynthesis. Its function is as follows. May be involved in the biosynthesis of caffeine. The sequence is that of Probable caffeine synthase MTL2 from Coffea canephora (Robusta coffee).